The sequence spans 236 residues: CD81 antigen (236 aa).

Residues 1 to 12 (MGVEGCTKCIKY) are Cytoplasmic-facing. The chain crosses the membrane as a helical span at residues 13 to 33 (LLFVFNFVFWLAGGVILGVAL). Topologically, residues 34-63 (WLRHDPQTTSLLYLELGNKPAPNTFYVGIY) are extracellular. A helical transmembrane segment spans residues 64-84 (ILIAVGAVMMFVGFLGCYGAI). Residues 85-89 (QESQC) are Cytoplasmic-facing. Residues 90–112 (LLGTFFTCLVILFACEVAAGIWG) form a helical membrane-spanning segment. Residues 113–201 (FVNKDQIAKD…QKIDELFSGK (89 aa)) lie on the Extracellular side of the membrane. Cystine bridges form between Cys-156–Cys-190 and Cys-157–Cys-175. The helical transmembrane segment at 202–224 (LYLIGIAAIVVAVIMIFEMILSM) threads the bilayer. Position 219 (Glu-219) interacts with cholesterol. Residues 225-236 (VLCCGIRNSSVY) lie on the Cytoplasmic side of the membrane.

Belongs to the tetraspanin (TM4SF) family. Homodimer. Part of a complex composed of CD19, CR2/CD21, CD81 and IFITM1/CD225 in the membrane of mature B cells. Interacts (via the second extracellular domain) with CD19; this interaction is initiated early during biosynthesis in the ER and enables trafficking of only properly folded CD19. Part of a complex that includes MHC class II/HLA-DR molecules and IFITM1. Interacts with IFITM1. Interacts with IFITM2 and IFITM3. Part of integrin-tetraspanin complex composed of CD9, CD81, beta-1 and beta-2 integrins in the membrane of monocyte/macrophages. Interacts (via the second extracellular domain) with integrin ITGAV:ITGB3. Interacts with CD247/CD3 zeta, ICAM1 and CD9 at the immune synapse on T cell membrane. Part of a GPCR-tetraspanin complex consisting at least of ADGRG1, CD81, possibly CD9, and GNA11 in which CD81 enhances the association of ADGRG1 with GNA11. Part of a complex composed of CD9, CD81, PTGFRN and IGSF8. Interacts directly with IGSF8. Interacts with CD53 and SCIMP. Interacts with SAMHD1 (via its C-terminus). Interacts with glypican GPC3 and with the transcriptional repressor HHEX; binding to GPC3 decreases the availability of free CD81 for binding to HHEX, resulting in nuclear translocation of HHEX and transcriptional repression. Interacts with CLDN1. Interacts with CLDN6 and CLDN9. Not glycosylated. Post-translationally, likely constitutively palmitoylated at low levels. Protein palmitoylation is up-regulated upon coligation of BCR and CD9-C2R-CD81 complexes in lipid rafts. In terms of tissue distribution, expressed in oocytes (at protein level). Highly expressed in granulosa cells. Expressed in skeletal muscle mainly in endothelial cells of endomysial capillaries, in satellite cells and myoblasts (at protein level). Expressed in hepatocytes (at protein level).

It localises to the cell membrane. The protein localises to the basolateral cell membrane. In terms of biological role, structural component of specialized membrane microdomains known as tetraspanin-enriched microdomains (TERMs), which act as platforms for receptor clustering and signaling. Essential for trafficking and compartmentalization of CD19 receptor on the cell surface of activated B cells. Upon initial encounter with a microbial pathogen, enables the assembly of CD19-CR2 and B cell receptor complexes at signaling TERMs, lowering the threshold dose of antigen required to trigger B cell clonal expansion and humoral immune response. In T cells, associates with CD4 or CD8 coreceptors and defines the maturation state of antigen-induced synapses with B cells. Facilitates localization of CD3 in these immune synapses, required for costimulation and sustained activation of T cells, preferentially triggering T helper type 2 immune response. Can act both as positive and negative regulator of homotypic or heterotypic cell-cell fusion processes. In myoblasts, associates with another tetraspanin CD9 in complex with PTGFRN and inhibits myotube fusion during muscle regeneration. In macrophages, associates with CD9 and beta-1 and beta-2 integrins, and prevents macrophage fusion into multinucleated giant cells specialized in ingesting complement-opsonized large particles. Also prevents the fusion between mononuclear cell progenitors into osteoclasts in charge of bone resorption. Positively regulates sperm-egg fusion and may be involved in the acrosome reaction. Regulates protein trafficking in intracellular compartments. In T cells, associates with dNTPase SAMHD1 and defines its subcellular location, enabling its degradation by the proteasome and thereby controlling intracellular dNTP levels. Also regulates integrin-dependent migration of macrophages, particularly relevant for inflammatory response in the lung. Its function is as follows. (Microbial infection) Specifically required for Plasmodium yoelii infectivity of hepatocytes, controlling sporozoite entry in hepatocytes via the parasitophorous vacuole and subsequent parasite differentiation to exoerythrocytic forms. This Mus musculus (Mouse) protein is CD81 antigen.